Consider the following 2694-residue polypeptide: Teneurin-3 (2694 aa).

Disordered regions lie at residues 1–45, 106–132, and 161–198; these read MDVK…SSSE, PSSLSSPSVTEHSHSQPPSPNLHDNQS, and TQPAPSHSCNEQPSNQHQQGQSTLPPVPPPHKQQPSVT. Residues 1-306 enclose the Teneurin N-terminal domain; sequence MDVKERRPYC…KSSKYCSWRC (306 aa). The Cytoplasmic segment spans residues 1-312; the sequence is MDVKERRPYC…SWRCTALSAM (312 aa). Positions 163-184 are enriched in polar residues; sequence PAPSHSCNEQPSNQHQQGQSTL. Residues 313–333 form a helical membrane-spanning segment; the sequence is AVSILLSVLLCYCIAMHLFGL. The Extracellular segment spans residues 334 to 2694; the sequence is NWQLQETEGY…FLRQSEIGKR (2361 aa). 2 N-linked (GlcNAc...) asparagine glycosylation sites follow: Asn-374 and Asn-413. EGF-like domains follow at residues 508-539, 540-570, 572-604, 605-636, 638-671, 672-703, 704-733, and 734-768; these read TLTECPHNCHGNGDCRTGTCHCFPGFLGPDCS, RAACPVLCSGNGQYSRGRCLCYSGWKGTECD, PSNQCIDIHCSGHGICIMGTCACNTGYKGDNCE, EVDCLDPSCSSHGVCIHGECHCNPGWGGNNCE, LKTMCPDQCSGHGTYQTESGTCTCDTNWTGPDCS, IEVCAVDCGSHGVCIGGSCRCEEGWTGSVCDL, KACHPRCTEHGTCKDGKCECHQGWTGEHCT, and VEGCPGLCNSNGRCTLDQNGWHCVCQPGWRGAGCD. 22 disulfide bridges follow: Cys-512–Cys-522, Cys-516–Cys-527, Cys-529–Cys-538, Cys-547–Cys-558, Cys-560–Cys-569, Cys-576–Cys-587, Cys-581–Cys-592, Cys-594–Cys-603, Cys-608–Cys-619, Cys-613–Cys-624, Cys-626–Cys-635, Cys-646–Cys-659, Cys-661–Cys-670, Cys-675–Cys-685, Cys-679–Cys-690, Cys-692–Cys-701, Cys-706–Cys-716, Cys-710–Cys-721, Cys-723–Cys-732, Cys-737–Cys-747, Cys-741–Cys-756, and Cys-758–Cys-767. Residue Asn-664 is glycosylated (N-linked (GlcNAc...) asparagine). 3 N-linked (GlcNAc...) asparagine glycosylation sites follow: Asn-854, Asn-877, and Asn-1048. 5 NHL repeats span residues 1166–1192, 1194–1238, 1264–1308, 1325–1365, and 1452–1495; these read LLAPVALACGSDGSLFVGDFNYIRRIF, SGNV…PKAL, ARCG…NGII, CDNS…ITEN, and CYQT…IRHN. N-linked (GlcNAc...) asparagine glycosylation is present at Asn-1196. The YD 1 repeat unit spans residues 1505–1524; it reads FEVASPASQELYVFDSNGTH. 2 N-linked (GlcNAc...) asparagine glycosylation sites follow: Asn-1521 and Asn-1538. 3 YD repeats span residues 1541–1561, 1604–1623, and 1624–1646; these read YSNEDDVTAVTDSSGNTLRVR, YHGNSGLLATKSIQIGWTTF, and YDYDSEGRLTNVTFPTGVITSLI. N-linked (GlcNAc...) asparagine glycans are attached at residues Asn-1634, Asn-1671, Asn-1729, and Asn-1814. YD repeat units lie at residues 1817-1836, 1858-1876, 1877-1897, 1904-1921, 1922-1943, 1944-1961, 1964-1984, 1987-2007, 2015-2034, 2040-2057, 2058-2084, 2086-2099, 2100-2123, 2126-2146, 2147-2167, 2169-2189, 2201-2221, and 2223-2243; these read YSSTGQVTSLQRGPTTERVE, YLDKSMVLLLHSQRQYIFD, YDLQDRLSAITMPSVARHTMQ, YYRNIYNPPESNASVTVD, YSEDGQLLRVAHLGTGRRVLYK, YRRQNKLSEILYDSTRVS, YDETAGVLKTVNLQSEGFICS, YRQIGPLVDRQIFRFSEDGMV, YDNSFRVTSMQGVINETPLP, FDDISGKVEQFGKFGVIY, YDINQIISTAVMTYTKHFDVHGRIKEI, YEIFRSLMYWITIQ, YDNMGRVTKREIKIGPFANTTKYG, YDVDGQLQTVYLNEKMMWRYN, YDLNGNLHLLNPGNSARLTPL, YDLRDRITRLGDVQYRMDEDG, YNSKGLLVRVHSKASGWTIQY, and YDGLGRRLASRNSLGQHLQFF. The N-linked (GlcNAc...) asparagine glycan is linked to Asn-1915. A glycan (N-linked (GlcNAc...) asparagine) is linked at Asn-2118. Asn-2258 carries N-linked (GlcNAc...) asparagine glycosylation. The stretch at 2269–2310 is one YD 23 repeat; sequence YDLQGHLFAMEISSGEEFYIACDNTGTPLAVFSSNGLLLKQV. Asn-2571 is a glycosylation site (N-linked (GlcNAc...) asparagine).

The protein belongs to the tenascin family. Teneurin subfamily. As to quaternary structure, homodimer; disulfide-linked; to mediate homophilic cell adhesion. As to expression, expressed by retinal ganglion cells and their presynaptic amacrine and postsynaptic tectal cell targets.

The protein resides in the cell membrane. It localises to the cell projection. Its subcellular location is the axon. Functionally, involved in neural development by regulating the establishment of proper connectivity within the nervous system. Acts in both pre- and postsynaptic neurons in the hippocampus to control the assembly of a precise topographic projection: required in both CA1 and subicular neurons for the precise targeting of proximal CA1 axons to distal subiculum, probably by promoting homophilic cell adhesion. Required by retinal ganglion cells for acquisition of their correct morphological and functional connectivity, thereby playing a key role in the development of the visual pathway. The chain is Teneurin-3 (tenm3) from Danio rerio (Zebrafish).